The following is a 309-amino-acid chain: NAD kinase 2 (309 aa).

The active-site Proton acceptor is the D81. Residues 81–82 (DG), 155–156 (NE), D185, 196–201 (TAYALS), and N255 each bind NAD(+).

It belongs to the NAD kinase family. The cofactor is a divalent metal cation.

It is found in the cytoplasm. It carries out the reaction NAD(+) + ATP = ADP + NADP(+) + H(+). Its function is as follows. Involved in the regulation of the intracellular balance of NAD and NADP, and is a key enzyme in the biosynthesis of NADP. Catalyzes specifically the phosphorylation on 2'-hydroxyl of the adenosine moiety of NAD to yield NADP. This chain is NAD kinase 2, found in Gloeobacter violaceus (strain ATCC 29082 / PCC 7421).